The primary structure comprises 150 residues: SsrA-binding protein (150 aa).

This sequence belongs to the SmpB family.

It localises to the cytoplasm. Required for rescue of stalled ribosomes mediated by trans-translation. Binds to transfer-messenger RNA (tmRNA), required for stable association of tmRNA with ribosomes. tmRNA and SmpB together mimic tRNA shape, replacing the anticodon stem-loop with SmpB. tmRNA is encoded by the ssrA gene; the 2 termini fold to resemble tRNA(Ala) and it encodes a 'tag peptide', a short internal open reading frame. During trans-translation Ala-aminoacylated tmRNA acts like a tRNA, entering the A-site of stalled ribosomes, displacing the stalled mRNA. The ribosome then switches to translate the ORF on the tmRNA; the nascent peptide is terminated with the 'tag peptide' encoded by the tmRNA and targeted for degradation. The ribosome is freed to recommence translation, which seems to be the essential function of trans-translation. This chain is SsrA-binding protein, found in Nitratiruptor sp. (strain SB155-2).